Here is a 108-residue protein sequence, read N- to C-terminus: Nucleoid-associated protein Pmen_2646 (108 aa).

Positions 1–25 (MMKGGMAGLMKQAQQMQEKMQKMQE) are disordered.

This sequence belongs to the YbaB/EbfC family. As to quaternary structure, homodimer.

It localises to the cytoplasm. The protein resides in the nucleoid. Binds to DNA and alters its conformation. May be involved in regulation of gene expression, nucleoid organization and DNA protection. This Ectopseudomonas mendocina (strain ymp) (Pseudomonas mendocina) protein is Nucleoid-associated protein Pmen_2646.